The following is a 121-amino-acid chain: Surface glycoprotein CD59 homolog (121 aa).

An N-terminal signal peptide occupies residues 1-19 (MYILFTLVLTFVFCKPIHS). The UPAR/Ly6 domain maps to 20–104 (LQCYNCSHST…ENIKRTISDK (85 aa)). Intrachain disulfides connect Cys-22-Cys-45, Cys-25-Cys-32, Cys-38-Cys-58, Cys-64-Cys-82, and Cys-83-Cys-88. N-linked (GlcNAc...) asparagine; by host glycosylation occurs at Asn-24. A lipid anchor (GPI-anchor amidated asparagine; by host) is attached at Asn-96. The propeptide at 97 to 121 (IKRTISDKALLLLALFLVTAWNFPL) is removed in mature form.

It localises to the host cell membrane. The sequence is that of Surface glycoprotein CD59 homolog (15) from Saimiriine herpesvirus 2 (strain 11) (SaHV-2).